A 781-amino-acid polypeptide reads, in one-letter code: Catenin beta-1 (781 aa).

An N-acetylalanine modification is found at alanine 2. The interval 2-23 (ATQADLMELDMAMEPDRKAAVS) is interaction with VCL. Serine 23 bears the Phosphoserine; by GSK3-beta; alternate mark. O-linked (GlcNAc) serine; alternate glycosylation is present at serine 23. Serine 29 is modified (phosphoserine; by GSK3-beta). A phosphoserine; by GSK3-beta and HIPK2 mark is found at serine 33 and serine 37. Residues 34–57 (GIHSGATTTAPSLSGKGNPEEEDV) are disordered. Threonine 41 bears the Phosphothreonine; by GSK3-beta mark. Serine 45 is modified (phosphoserine). N6-acetyllysine is present on lysine 49. Tyrosine 64 carries the post-translational modification Phosphotyrosine; by PTK6. Position 142 is a phosphotyrosine; by FYN and PTK6 (tyrosine 142). 12 ARM repeats span residues 151–191 (RAIP…IMRS), 193–234 (QMVS…IFKS), 235–276 (GGIP…VRLA), 277–318 (GGLQ…ILAS), 319–360 (GGPQ…IVEA), 361–389 (GGMQ…RNLS), 400–441 (GLLG…VCQV), 442–484 (GGIE…AQNA), 489–530 (YGLP…LREQ), 531–571 (GAIP…EIVE), 594–636 (NTIP…AEGA), and 637–666 (TAPL…SEDK). An interaction with BCL9 region spans residues 156 to 178 (LTKLLNDEDQVVVNKAAVMVHQL). Serine 191 carries the phosphoserine modification. Serine 246 bears the Phosphoserine; by CDK5 mark. Phosphotyrosine occurs at positions 331 and 333. Position 552 is a phosphoserine (serine 552). Threonine 556 is modified (phosphothreonine). Position 619 is an S-nitrosocysteine (cysteine 619). Serine 675 is subject to Phosphoserine. The interval 720–781 (HSGGYGQDAL…NQLAWFDTDL (62 aa)) is disordered. Over residues 734-745 (MMEHEMGGHHPG) the composition is skewed to basic and acidic residues. The interaction with SCRIB stretch occupies residues 772 to 781 (NQLAWFDTDL).

The protein belongs to the beta-catenin family. In terms of assembly, two separate complex-associated pools are found in the cytoplasm. The majority is present as component of an E-cadherin/ catenin adhesion complex composed of at least E-cadherin/CDH1 and beta-catenin/CTNNB1, and possibly alpha-catenin/CTNNA1; the complex is located to adherens junctions. The stable association of CTNNA1 is controversial as CTNNA1 was shown not to bind to F-actin when assembled in the complex. Alternatively, the CTNNA1-containing complex may be linked to F-actin by other proteins such as LIMA1. Another cytoplasmic pool is part of a large complex containing AXIN1, AXIN2, APC, CSNK1A1 and GSK3B that promotes phosphorylation on N-terminal Ser and Thr residues and ubiquitination of CTNNB1. Interacts directly with AXIN1; the interaction is regulated by CK2 via BTRC and its subsequent degradation by the proteasome. Interacts directly with AXIN1; the interaction is regulated by CDK2 phosphorylation. Wnt-dependent activation of DVL antagonizes the action of GSK3B. When GSK3B activity is inhibited the complex dissociates, CTNNB1 is dephosphorylated and is no longer targeted for destruction. The stabilized protein translocates to the nucleus, where it binds TCF/LEF-1 family members, BCL9, BCL9L and possibly also RUVBL1 and CHD8. Binds CTNNBIP and EP300. CTNNB1 forms a ternary complex with LEF1 and EP300 that is disrupted by CTNNBIP1 binding. Interacts with TAX1BP3 (via the PDZ domain); this interaction inhibits the transcriptional activity of CTNNB1. Interacts with AJAP1, BAIAP1, CARM1, CTNNA3, CXADR and PCDH11Y. Binds NHERF1. Interacts with GLIS2. Interacts with XIRP1. Interacts with PTPRU (via the cytoplasmic juxtamembrane domain) and with SLC30A9. Interacts with EMD. Interacts with SCRIB. Interacts with TNIK and TCF7L2. Interacts with SESTD1 and TRPC4. Interacts directly with AXIN1; the interaction is regulated by CDK2 phosphorylation of AXIN1. Interacts with CAV1. Interacts with TRPV4. The TRPV4 and CTNNB1 complex can interact with CDH1. Interacts with VCL. Interacts with PTPRJ. Interacts with PKT7. Interacts with NANOS1. Interacts with CDK2, NDRG2, NEK2 and CDK5. Found in a complex composed of MACF1, APC, AXIN1, CTNNB1 and GSK3B. Interacts with PTK6. Interacts with SOX7; this interaction may lead to proteasomal degradation of active CTNNB1 and thus inhibition of Wnt/beta-catenin-stimulated transcription. Identified in a complex with HINT1 and MITF. Interacts with FHIT. The CTNNB1 and TCF4 complex interacts with PML. Interacts with FERMT2. Identified in a complex with TCF4 and FERMT2. Interacts with RAPGEF2. Interacts with FAT1 (via the cytoplasmic domain). Interacts with RORA. May interact with P-cadherin/CDH3. Interacts with RNF220. Interacts with CTNND2. Interacts (via the C-terminal region) with CBY1. The complex composed, at least, of APC, CTNNB1 and GSK3B interacts with JPT1; the interaction requires the inactive form of GSK3B (phosphorylated at 'Ser-9'). Interacts with DLG5. Interacts with FAM53B; promoting translocation to the nucleus. Interacts with TMEM170B. Interacts with AHI1. Interacts with GID8. Component of an cadherin:catenin adhesion complex composed of at least of CDH26, beta-catenin/CTNNB1, alpha-catenin/CTNNA1 and p120 catenin/CTNND1. Forms a complex comprising APPL1, RUVBL2, APPL2, HDAC1 and HDAC2. Interacts with IRF2BPL; mediates the ubiquitination and degradation of CTNNB1. Interacts with AMFR. Interacts with LMBR1L. Interacts with SOX30; prevents interaction of CTNNB1 with TCF7L2/TCF4 and leads to inhibition of Wnt signaling. Interacts with SOX9; inhibiting CTNNB1 activity by competing with the binding sites of TCF/LEF within CTNNB1, thereby inhibiting the Wnt signaling. Interacts with SPN/CD43 cytoplasmic tail. Interacts (when phosphorylated at Tyr-333) with isoform M2 of PKM (PKM2); promoting transcription activation. Interacts with PKP2 (via HEAD domain). Interacts with CDH1. Interacts (when unphosphorylated) with FLYWCH1, perhaps preventing interaction of CTNNB1 with TCF4, and thereby regulating transcription activation; phosphorylation of CTNNB1 may inhibit the interaction. Interacts (via the central armadillo domains) with probable transcriptional regulator ADNP (via N-terminal region); interaction is direct and stabilizes CTNNB1 by modulating its phosphorylation by glycogen synthase kinase-3 beta GSK3B. Interacts with NR5A2. Interacts with DSG2; the interaction promotes localization of CTNNB1 at cell junctions thus reducing its nuclear localization and subsequent transcription of CTNNB1/TCF-target genes. Post-translationally, phosphorylation by GSK3B requires prior phosphorylation of Ser-45 by another kinase. Phosphorylation proceeds then from Thr-41 to Ser-33. Phosphorylated by NEK2. EGF stimulates tyrosine phosphorylation. Phosphorylated on Ser-33 and Ser-37 by HIPK2. This phosphorylation triggers proteasomal degradation. Phosphorylation at Ser-552 by AMPK promotes stabilization of the protein, enhancing TCF/LEF-mediated transcription. Phosphorylation on Ser-191 and Ser-246 by CDK5. Phosphorylation by CDK2 regulates insulin internalization. Phosphorylation by PTK6 at Tyr-64, Tyr-142, Tyr-331 and/or Tyr-333 with the predominant site at Tyr-64 is not essential for inhibition of transcriptional activity. Phosphorylation by SRC at Tyr-333 promotes interaction with isoform M2 of PKM (PKM2); promoting transcription activation. Ubiquitinated by the SCF(BTRC) E3 ligase complex when phosphorylated by GSK3B, leading to its degradation. Ubiquitinated by a E3 ubiquitin ligase complex containing UBE2D1, SIAH1, CACYBP/SIP, SKP1, APC and TBL1X, leading to its subsequent proteasomal degradation. Ubiquitinated and degraded following interaction with SOX9. Ubiquitinated via 'Lys-11'- and 'Lys-29'-linked ubiquitin chains by UBR5, leading to its stabilization. In terms of processing, S-nitrosylation at Cys-619 within adherens junctions promotes VEGF-induced, NO-dependent endothelial cell permeability by disrupting interaction with E-cadherin, thus mediating disassembly adherens junctions. Post-translationally, O-glycosylation at Ser-23 decreases nuclear localization and transcriptional activity, and increases localization to the plasma membrane and interaction with E-cadherin CDH1. Deacetylated at Lys-49 by SIRT1. In terms of tissue distribution, expressed in the testis.

The protein resides in the cytoplasm. It is found in the nucleus. The protein localises to the cytoskeleton. It localises to the cell junction. Its subcellular location is the adherens junction. The protein resides in the cell membrane. It is found in the microtubule organizing center. The protein localises to the centrosome. It localises to the spindle pole. Its subcellular location is the synapse. The protein resides in the cilium basal body. Key downstream component of the canonical Wnt signaling pathway. In the absence of Wnt, forms a complex with AXIN1, AXIN2, APC, CSNK1A1 and GSK3B that promotes phosphorylation on N-terminal Ser and Thr residues and ubiquitination of CTNNB1 via BTRC and its subsequent degradation by the proteasome. In the presence of Wnt ligand, CTNNB1 is not ubiquitinated and accumulates in the nucleus, where it acts as a coactivator for transcription factors of the TCF/LEF family, leading to activate Wnt responsive genes. Also acts as a coactivator for other transcription factors, such as NR5A2. Promotes epithelial to mesenchymal transition/mesenchymal to epithelial transition (EMT/MET) via driving transcription of CTNNB1/TCF-target genes. Involved in the regulation of cell adhesion, as component of an E-cadherin:catenin adhesion complex. Acts as a negative regulator of centrosome cohesion. Involved in the CDK2/PTPN6/CTNNB1/CEACAM1 pathway of insulin internalization. Blocks anoikis of malignant kidney and intestinal epithelial cells and promotes their anchorage-independent growth by down-regulating DAPK2. Disrupts PML function and PML-NB formation by inhibiting RANBP2-mediated sumoylation of PML. Promotes neurogenesis by maintaining sympathetic neuroblasts within the cell cycle. Involved in chondrocyte differentiation via interaction with SOX9: SOX9-binding competes with the binding sites of TCF/LEF within CTNNB1, thereby inhibiting the Wnt signaling. Acts as a positive regulator of odontoblast differentiation during mesenchymal tooth germ formation, via promoting the transcription of differentiation factors such as LEF1, BMP2 and BMP4. Activity is repressed in a MSX1-mediated manner at the bell stage of mesenchymal tooth germ formation which prevents premature differentiation of odontoblasts. The chain is Catenin beta-1 from Rattus norvegicus (Rat).